Consider the following 124-residue polypeptide: Small ribosomal subunit protein bS16 (124 aa).

Residues 82–124 (LAKRPARSNPTKAVPGKKAQERAAEAKQKAEDAAAAAAESAAE) are disordered. Residues 99 to 113 (KAQERAAEAKQKAED) show a composition bias toward basic and acidic residues. The span at 114 to 124 (AAAAAAESAAE) shows a compositional bias: low complexity.

This sequence belongs to the bacterial ribosomal protein bS16 family.

The polypeptide is Small ribosomal subunit protein bS16 (Sinorhizobium fredii (strain NBRC 101917 / NGR234)).